The following is a 625-amino-acid chain: DNA mismatch repair protein MutL (625 aa).

A disordered region spans residues 404–427 (PPPRNAPQSTGMPSMAGTGLPATS).

Belongs to the DNA mismatch repair MutL/HexB family.

Functionally, this protein is involved in the repair of mismatches in DNA. It is required for dam-dependent methyl-directed DNA mismatch repair. May act as a 'molecular matchmaker', a protein that promotes the formation of a stable complex between two or more DNA-binding proteins in an ATP-dependent manner without itself being part of a final effector complex. The polypeptide is DNA mismatch repair protein MutL (Xanthomonas oryzae pv. oryzae (strain MAFF 311018)).